The chain runs to 277 residues: NLP effector protein Pc109095 (277 aa).

The signal sequence occupies residues 1-19; the sequence is MKFIFAFVLCLAVAQTALG. The Hepta-peptide GHRHDWE motif motif lies at 119–125; the sequence is RSRHLWA. Residue N199 is glycosylated (N-linked (GlcNAc...) asparagine).

It belongs to the Necrosis inducing protein (NPP1) family.

It is found in the secreted. Functionally, secreted effector that contributes strongly to virulence during infection by P.capsici. The chain is NLP effector protein Pc109095 from Phytophthora capsici.